Reading from the N-terminus, the 388-residue chain is Alanine racemase (388 aa).

Lys-39 serves as the catalytic Proton acceptor; specific for D-alanine. Position 39 is an N6-(pyridoxal phosphate)lysine (Lys-39). At Lys-129 the chain carries N6-carboxylysine. Arg-136 is a binding site for substrate. The active-site Proton acceptor; specific for L-alanine is the Tyr-265. Met-312 is a substrate binding site.

The protein belongs to the alanine racemase family. Homodimer. It depends on pyridoxal 5'-phosphate as a cofactor.

The enzyme catalyses L-alanine = D-alanine. It participates in amino-acid biosynthesis; D-alanine biosynthesis; D-alanine from L-alanine: step 1/1. Its activity is regulated as follows. Inhibited by acetate and propionate. Irreversibly inhibited by cycloserine. Its function is as follows. Catalyzes the interconversion of L-alanine and D-alanine. Also weakly active on serine. The protein is Alanine racemase (alr) of Geobacillus stearothermophilus (Bacillus stearothermophilus).